The primary structure comprises 501 residues: Dye-decolorizing peroxidase (501 aa).

A signal peptide spans Met1 to Ala21. Positions Arg22–Val60 are excised as a propeptide. The Proton acceptor role is filled by Asp228. An N-linked (GlcNAc...) asparagine glycan is attached at Asn352. His367 contacts heme. Asn403 is a glycosylation site (N-linked (GlcNAc...) asparagine).

It belongs to the DyP-type peroxidase family. The cofactor is heme b.

Its subcellular location is the secreted. The catalysed reaction is Reactive Blue 5 + 2 H2O2 = 2,2'-disulfonyl azobenzene + 3-[(4-amino-6-chloro-1,3,5-triazin-2-yl)amino]benzenesulfonate + phthalate + 2 H2O + 2 H(+). It catalyses the reaction 2 a phenolic donor + H2O2 = 2 a phenolic radical donor + 2 H2O. Its function is as follows. Manganese-independent peroxidase that is able to convert a large number of compounds, but its physiological substrate is not known. In addition to classic peroxidase substrates (e.g. 2,6-dimethoxyphenol), oxidizes dyes such as Reactive Blue 5 and Reactive Black 5. The sequence is that of Dye-decolorizing peroxidase from Exidia glandulosa (Black witch's butter).